The following is a 711-amino-acid chain: Catalase HPII (711 aa).

Over residues 1-10 (MPSKKTDAPK) the composition is skewed to basic and acidic residues. The tract at residues 1–27 (MPSKKTDAPKQSEAAGTQTPDRANTNA) is disordered. Over residues 14 to 27 (AAGTQTPDRANTNA) the composition is skewed to polar residues. Active-site residues include histidine 92 and asparagine 165. Residue tyrosine 379 participates in heme binding.

This sequence belongs to the catalase family. HPII subfamily. Requires heme as cofactor.

The protein localises to the cytoplasm. It carries out the reaction 2 H2O2 = O2 + 2 H2O. In terms of biological role, decomposes hydrogen peroxide into water and oxygen; serves to protect cells from the toxic effects of hydrogen peroxide. In Pseudomonas putida (Arthrobacter siderocapsulatus), this protein is Catalase HPII (katE).